The sequence spans 428 residues: Enolase (428 aa).

Glutamine 163 is a binding site for (2R)-2-phosphoglycerate. Glutamate 205 serves as the catalytic Proton donor. The Mg(2+) site is built by aspartate 242, glutamate 285, and aspartate 312. Residues lysine 337, arginine 366, serine 367, and lysine 388 each coordinate (2R)-2-phosphoglycerate. Lysine 337 (proton acceptor) is an active-site residue.

Belongs to the enolase family. Requires Mg(2+) as cofactor.

The protein resides in the cytoplasm. It is found in the secreted. Its subcellular location is the cell surface. It carries out the reaction (2R)-2-phosphoglycerate = phosphoenolpyruvate + H2O. It functions in the pathway carbohydrate degradation; glycolysis; pyruvate from D-glyceraldehyde 3-phosphate: step 4/5. Catalyzes the reversible conversion of 2-phosphoglycerate (2-PG) into phosphoenolpyruvate (PEP). It is essential for the degradation of carbohydrates via glycolysis. This is Enolase from Neisseria gonorrhoeae (strain ATCC 700825 / FA 1090).